A 462-amino-acid chain; its full sequence is HEPACAM family member 2 (462 aa).

The first 31 residues, 1 to 31 (MGQDAFMEPFGDTLGVFQCKIYLLLFGACSG), serve as a signal peptide directing secretion. N-linked (GlcNAc...) asparagine glycans are attached at residues N85, N129, and N165. Ig-like C2-type domains are found at residues 149–233 (PVVQ…SDII) and 235–331 (PIIY…THFT). 2 cysteine pairs are disulfide-bonded: C170-C219 and C270-C315. The N-linked (GlcNAc...) asparagine glycan is linked to N320. A helical membrane pass occupies residues 352 to 372 (LASITGISLFLIISMCLLFLW). Residues 373 to 462 (KKYQPYKVIK…IPAQQQDHPE (90 aa)) are Cytoplasmic-facing.

In terms of processing, poly-ADP-ribosylated (PARsylated) by tankyrase TNKS during late G2 and prophase, leading to translocation to mitotic centrosomes. N-glycosylated. In terms of tissue distribution, widely expressed.

It localises to the golgi apparatus membrane. It is found in the cytoplasm. The protein resides in the cytoskeleton. The protein localises to the spindle. Its subcellular location is the microtubule organizing center. It localises to the centrosome. It is found in the midbody. Required during prometaphase for centrosome maturation. Following poly-ADP-ribosylation (PARsylation) by TNKS, translocates from the Golgi apparatus to mitotic centrosomes and plays a key role in the formation of robust microtubules for prompt movement of chromosomes: anchors AKAP9/CG-NAP, a scaffold protein of the gamma-tubulin ring complex and promotes centrosome maturation. This chain is HEPACAM family member 2 (HEPACAM2), found in Homo sapiens (Human).